Consider the following 429-residue polypeptide: Glycine betaine monooxygenase oxygenase subunit (429 aa).

Positions 56 to 163 constitute a Rieske domain; the sequence is WLIAGMTCEI…VKTAGGYIFI (108 aa). The [2Fe-2S] cluster site is built by Cys-98, His-100, Cys-118, and His-121. Residues His-217 and His-222 each contribute to the Fe cation site.

The protein belongs to the bacterial ring-hydroxylating dioxygenase alpha subunit family. In terms of assembly, the system is composed of an oxygenase subunit (GbcA) and a reductase subunit (GbcB). [2Fe-2S] cluster serves as cofactor. Requires Fe cation as cofactor.

It carries out the reaction glycine betaine + NADH + O2 + H(+) = N,N-dimethylglycine + formaldehyde + NAD(+) + H2O. Functionally, involved in degradation of glycine betaine. Part of a Rieske-type oxygenase system that catalyzes the conversion of glycine betaine (GB) to dimethylglycine (DMG). This subunit is the terminal oxygenase component of the system. This is Glycine betaine monooxygenase oxygenase subunit from Pseudomonas aeruginosa (strain UCBPP-PA14).